The chain runs to 212 residues: Thiamine-phosphate synthase (212 aa).

4-amino-2-methyl-5-(diphosphooxymethyl)pyrimidine is bound by residues 40–44 (QFREK) and N75. Residues D76 and D95 each contribute to the Mg(2+) site. Residue S113 participates in 4-amino-2-methyl-5-(diphosphooxymethyl)pyrimidine binding. Residue 139–141 (TIS) coordinates 2-[(2R,5Z)-2-carboxy-4-methylthiazol-5(2H)-ylidene]ethyl phosphate. K142 provides a ligand contact to 4-amino-2-methyl-5-(diphosphooxymethyl)pyrimidine. 2-[(2R,5Z)-2-carboxy-4-methylthiazol-5(2H)-ylidene]ethyl phosphate is bound by residues G171 and 191–192 (IS).

The protein belongs to the thiamine-phosphate synthase family. Requires Mg(2+) as cofactor.

It carries out the reaction 2-[(2R,5Z)-2-carboxy-4-methylthiazol-5(2H)-ylidene]ethyl phosphate + 4-amino-2-methyl-5-(diphosphooxymethyl)pyrimidine + 2 H(+) = thiamine phosphate + CO2 + diphosphate. The catalysed reaction is 2-(2-carboxy-4-methylthiazol-5-yl)ethyl phosphate + 4-amino-2-methyl-5-(diphosphooxymethyl)pyrimidine + 2 H(+) = thiamine phosphate + CO2 + diphosphate. The enzyme catalyses 4-methyl-5-(2-phosphooxyethyl)-thiazole + 4-amino-2-methyl-5-(diphosphooxymethyl)pyrimidine + H(+) = thiamine phosphate + diphosphate. It functions in the pathway cofactor biosynthesis; thiamine diphosphate biosynthesis; thiamine phosphate from 4-amino-2-methyl-5-diphosphomethylpyrimidine and 4-methyl-5-(2-phosphoethyl)-thiazole: step 1/1. Condenses 4-methyl-5-(beta-hydroxyethyl)thiazole monophosphate (THZ-P) and 2-methyl-4-amino-5-hydroxymethyl pyrimidine pyrophosphate (HMP-PP) to form thiamine monophosphate (TMP). This chain is Thiamine-phosphate synthase, found in Staphylococcus haemolyticus (strain JCSC1435).